A 583-amino-acid chain; its full sequence is Lamin-B3 (583 aa).

The tract at residues 1-30 (MATSTPSRAREHASAAQSPGSPTRISRMQE) is disordered. A head region spans residues 2–32 (ATSTPSRAREHASAAQSPGSPTRISRMQEKE). The span at 15–26 (AAQSPGSPTRIS) shows a compositional bias: polar residues. A Phosphoserine modification is found at S21. The region spanning 30–386 (EKEDLRHLND…KMLEGEEQRL (357 aa)) is the IF rod domain. Positions 33-67 (DLRHLNDRLAAYIERVRSLEADKSLLKIQLEEREE) are coil 1A. The linker 1 stretch occupies residues 68–79 (VSSREVTNLRQL). The coil 1B stretch occupies residues 80-215 (YETELADARK…QKNIHTQEVK (136 aa)). The tract at residues 216 to 242 (EIKKRHDTRIVEIDSGRRVEFESKLAE) is linker 2. The tract at residues 243 to 384 (ALQELRRDHE…YRKMLEGEEQ (142 aa)) is coil 2. The segment at 383 to 431 (EQRLKLSPSPSQRSTVSRASTSQTSRLLRGKKRKLDETGRSVTKRSYKV) is disordered. Residues 385–580 (RLKLSPSPSQ…QSHQSVDPSC (196 aa)) are tail. Residues 390-408 (PSPSQRSTVSRASTSQTSR) show a composition bias toward polar residues. The residue at position 391 (S391) is a Phosphoserine. The 118-residue stretch at 429 to 546 (YKVVQQASST…EECAERTLYR (118 aa)) folds into the LTD domain. C580 is subject to Cysteine methyl ester. C580 is lipidated: S-farnesyl cysteine. Residues 581–583 (SIM) constitute a propeptide, removed in mature form.

It belongs to the intermediate filament family. In terms of processing, phosphorylation plays a key role in lamin organization, subcellular localization and nuclear envelope disintegration. Phosphorylation by CDK1 at Ser-21 at the onset of mitosis drives lamin disassembly and nuclear envelope breakdown.

It localises to the nucleus lamina. Its subcellular location is the nucleus envelope. It is found in the nucleus. The protein localises to the nucleoplasm. The protein resides in the nucleus matrix. Its function is as follows. Lamins are intermediate filament proteins that assemble into a filamentous meshwork, and which constitute the major components of the nuclear lamina, a fibrous layer on the nucleoplasmic side of the inner nuclear membrane. Lamins provide a framework for the nuclear envelope, bridging the nuclear envelope and chromatin, thereby playing an important role in nuclear assembly, chromatin organization, nuclear membrane and telomere dynamics. The structural integrity of the lamina is strictly controlled by the cell cycle, as seen by the disintegration and formation of the nuclear envelope in prophase and telophase, respectively. The sequence is that of Lamin-B3 (lmnb3.L) from Xenopus laevis (African clawed frog).